We begin with the raw amino-acid sequence, 1146 residues long: Large proline-rich protein BAG6 (1146 aa).

Methionine 1 carries the N-acetylmethionine modification. The 76-residue stretch at 17–92 (LEVLVKTLDS…HLVERAPPQT (76 aa)) folds into the Ubiquitin-like domain. Disordered stretches follow at residues 87 to 128 (RAPP…HDRN), 186 to 268 (RGGT…HPSP), 381 to 436 (TMTG…TSHP), 457 to 525 (QDSG…QGAG), and 555 to 618 (PGMA…SAAD). The residue at position 96 (serine 96) is a Phosphoserine. Positions 96-108 (SGASSGTGSASAT) are enriched in low complexity. The span at 109–122 (HGGGPLPGTRGPGA) shows a compositional bias: gly residues. A Phosphothreonine modification is found at threonine 117. Polar residues predominate over residues 208–217 (VALNSQTSEP). Repeat copies occupy residues 236–265 (RPPTQTPELPPSGPAPAGPAPAPETNAPNH) and 410–438 (PSSATVDSSTEGAPPPGPAPPPATSHPRV). Residues 236 to 650 (RPPTQTPELP…LASPTITVAV (415 aa)) are 4 X 29 AA approximate repeats. The span at 239-257 (TQTPELPPSGPAPAGPAPA) shows a compositional bias: pro residues. A compositionally biased stretch (low complexity) spans 394-413 (GAEAASPGSGQASSLPPSSA). 2 stretches are compositionally biased toward pro residues: residues 422–433 (APPPGPAPPPAT) and 502–515 (PTPPQARPSHPGGP). 2 stretches are compositionally biased toward low complexity: residues 555-573 (PGMAPASASAPATAQAQAP) and 583-601 (PATASASAGTTNTATTAGP). 2 consecutive repeat copies span residues 589-616 (SAGTTNTATTAGPAPGGPAQPPPPQPSA) and 622-650 (SQLLGNLLGPAGPGAGGPSLASPTITVAV). Residues 603–614 (PGGPAQPPPPQP) show a composition bias toward pro residues. Disordered stretches follow at residues 666–711 (ASQA…ESLP) and 961–1146 (PQAL…ADDP). Residues 670–694 (APPPPPPPPPPPPAPEQQTTPPPGS) show a composition bias toward pro residues. Residues 977-986 (TSPEPQREDA) show a composition bias toward basic and acidic residues. Serine 978 and serine 987 each carry phosphoserine. Residues 1021-1034 (AEPWAAAVPPEWVP) show a composition bias toward low complexity. Residues 1024–1054 (WAAAVPPEWVPIIQQDIQSQRKVKPQPPLSD) are required for interaction with GET4. A Nuclear localization site motif is present at residues 1026-1068 (AAVPPEWVPIIQQDIQSQRKVKPQPPLSDAYLSGMPAKRRKTM). The interval 1036–1146 (IQQDIQSQRK…NAHRAFADDP (111 aa)) is sufficient for the delivery of client proteins to the endoplasmic reticulum. Threonine 1067 carries the post-translational modification Phosphothreonine. Residues 1072 to 1129 (GPQLLLSEAVSRAAKAAGARPLTSPESLSRDLEAPEVQESYRQQLRSDIQKRLQEDPN) form a BAG-similar domain, required and sufficient for interaction with UBL4A region. Positions 1080 to 1090 (AVSRAAKAAGA) are enriched in low complexity. 2 positions are modified to phosphoserine: serine 1095 and serine 1131.

In terms of assembly, component of the BAG6/BAT3 complex, also named BAT3 complex, at least composed of BAG6, UBL4A and GET4/TRC35. Interacts with GET4; the interaction is direct and localizes BAG6 in the cytosol. Interacts with UBL4A; the interaction is direct and required for UBL4A protein stability. Interacts with AIFM1. Interacts with HSPA2. Interacts with CTCFL. Interacts with p300/EP300. Interacts (via ubiquitin-like domain) with RNF126; required for BAG6-dependent ubiquitination of proteins mislocalized to the cytosol. Interacts (via ubiquitin-like domain) with SGTA; SGTA competes with RNF126 by binding the same region of BAG6, thereby promoting deubiquitination of BAG6-target proteins and rescuing them from degradation. Interacts with ricin A chain. Interacts with VCP and AMFR; both form the VCP/p97-AMFR/gp78 complex. Interacts with SYVN1. Interacts with USP13; the interaction is direct and may mediate UBL4A deubiquitination. Interacts with ZFAND2B. Interacts with KPNA2. Interacts with UBQLN4. In terms of processing, ricin can induce a cleavage by the caspase CASP3. The released C-terminal peptide induces apoptosis.

The protein resides in the cytoplasm. Its subcellular location is the cytosol. The protein localises to the nucleus. It localises to the secreted. It is found in the extracellular exosome. ATP-independent molecular chaperone preventing the aggregation of misfolded and hydrophobic patches-containing proteins. Functions as part of a cytosolic protein quality control complex, the BAG6/BAT3 complex, which maintains these client proteins in a soluble state and participates in their proper delivery to the endoplasmic reticulum or alternatively can promote their sorting to the proteasome where they undergo degradation. The BAG6/BAT3 complex is involved in the post-translational delivery of tail-anchored/type II transmembrane proteins to the endoplasmic reticulum membrane. Recruited to ribosomes, it interacts with the transmembrane region of newly synthesized tail-anchored proteins and together with SGTA and ASNA1 mediates their delivery to the endoplasmic reticulum. Client proteins that cannot be properly delivered to the endoplasmic reticulum are ubiquitinated by RNF126, an E3 ubiquitin-protein ligase associated with BAG6 and are sorted to the proteasome. SGTA which prevents the recruitment of RNF126 to BAG6 may negatively regulate the ubiquitination and the proteasomal degradation of client proteins. Similarly, the BAG6/BAT3 complex also functions as a sorting platform for proteins of the secretory pathway that are mislocalized to the cytosol either delivering them to the proteasome for degradation or to the endoplasmic reticulum. The BAG6/BAT3 complex also plays a role in the endoplasmic reticulum-associated degradation (ERAD), a quality control mechanism that eliminates unwanted proteins of the endoplasmic reticulum through their retrotranslocation to the cytosol and their targeting to the proteasome. It maintains these retrotranslocated proteins in an unfolded yet soluble state condition in the cytosol to ensure their proper delivery to the proteasome. BAG6 is also required for selective ubiquitin-mediated degradation of defective nascent chain polypeptides by the proteasome. In this context, it may participate in the production of antigenic peptides and play a role in antigen presentation in immune response. BAG6 is also involved in endoplasmic reticulum stress-induced pre-emptive quality control, a mechanism that selectively attenuates the translocation of newly synthesized proteins into the endoplasmic reticulum and reroutes them to the cytosol for proteasomal degradation. BAG6 may ensure the proper degradation of these proteins and thereby protects the endoplasmic reticulum from protein overload upon stress. By inhibiting the polyubiquitination and subsequent proteasomal degradation of HSPA2 it may also play a role in the assembly of the synaptonemal complex during spermatogenesis. Also positively regulates apoptosis by interacting with and stabilizing the proapoptotic factor AIFM1. By controlling the steady-state expression of the IGF1R receptor, indirectly regulates the insulin-like growth factor receptor signaling pathway. Functionally, involved in DNA damage-induced apoptosis: following DNA damage, accumulates in the nucleus and forms a complex with p300/EP300, enhancing p300/EP300-mediated p53/TP53 acetylation leading to increase p53/TP53 transcriptional activity. When nuclear, may also act as a component of some chromatin regulator complex that regulates histone 3 'Lys-4' dimethylation (H3K4me2). In terms of biological role, released extracellularly via exosomes, it is a ligand of the natural killer/NK cells receptor NCR3 and stimulates NK cells cytotoxicity. It may thereby trigger NK cells cytotoxicity against neighboring tumor cells and immature myeloid dendritic cells (DC). Its function is as follows. May mediate ricin-induced apoptosis. This chain is Large proline-rich protein BAG6, found in Rattus norvegicus (Rat).